The sequence spans 249 residues: Type III pantothenate kinase (249 aa).

6-13 contacts ATP; sequence DCGNSFIK. Residues tyrosine 93 and 100–103 contribute to the substrate site; that span reads GLDR. Aspartate 102 (proton acceptor) is an active-site residue. A K(+)-binding site is contributed by aspartate 122. Position 125 (threonine 125) interacts with ATP. A substrate-binding site is contributed by threonine 181.

The protein belongs to the type III pantothenate kinase family. As to quaternary structure, homodimer. NH4(+) serves as cofactor. K(+) is required as a cofactor.

Its subcellular location is the cytoplasm. The catalysed reaction is (R)-pantothenate + ATP = (R)-4'-phosphopantothenate + ADP + H(+). The protein operates within cofactor biosynthesis; coenzyme A biosynthesis; CoA from (R)-pantothenate: step 1/5. Catalyzes the phosphorylation of pantothenate (Pan), the first step in CoA biosynthesis. This Pseudomonas fluorescens (strain SBW25) protein is Type III pantothenate kinase.